An 80-amino-acid chain; its full sequence is uncharacterized protein (80 aa).

This is an uncharacterized protein from Pseudoalteromonas phage PM2 (Bacteriophage PM2).